We begin with the raw amino-acid sequence, 187 residues long: Elongation factor P (187 aa).

It belongs to the elongation factor P family.

Its subcellular location is the cytoplasm. It functions in the pathway protein biosynthesis; polypeptide chain elongation. Its function is as follows. Involved in peptide bond synthesis. Stimulates efficient translation and peptide-bond synthesis on native or reconstituted 70S ribosomes in vitro. Probably functions indirectly by altering the affinity of the ribosome for aminoacyl-tRNA, thus increasing their reactivity as acceptors for peptidyl transferase. The polypeptide is Elongation factor P (Prochlorococcus marinus (strain NATL1A)).